The chain runs to 388 residues: MVLSVKQTLSPKIGLFRRNPSSSLGRSPVSLSFPSTELPKRTVLAVSKPLHLSSSLRAKSPVVRCEAYEADRSEPHPIGDDAAAAETKSEAAKKLKIGIYFATWWALNVVFNIYNKKVLNAYPYPWLTSTLSLAAGSLMMLISWAVGIVETPKTDFDFWKTLFPVAVAHTIGHVAATVSMSKVAVSFTHIIKSGEPAFSVLVSRFILGETFPTSVYLSLIPIIGGCALSALTELNFNMIGFMGAMISNLAFVFRNIFSKKGMKGKSVSGMNYYACLSMLSLLILTPFAIAVEGPQMWVDGWQTALATVGPQFVWWVVAQSVFYHLYNQVSYMSLDQISPLTFSVGNTMKRISVIVSSIIIFRTPVQPVNALGAAIAILGTFLYSQAKL.

The transit peptide at 1-65 (MVLSVKQTLS…LRAKSPVVRC (65 aa)) directs the protein to the chloroplast. The next 8 helical transmembrane spans lie at 95–115 (LKIG…NIYN), 129–149 (STLS…VGIV), 158–178 (FWKT…AATV), 211–231 (FPTS…LSAL), 233–253 (ELNF…AFVF), 273–293 (YACL…AVEG), 305–325 (LATV…FYHL), and 363–383 (TPVQ…TFLY). Positions 112–229 (NIYNKKVLNA…IPIIGGCALS (118 aa)) constitute an EamA domain.

This sequence belongs to the TPT transporter family. GPT (TC 2.A.7.9) subfamily. Expressed in seeds, flowers, rosette leaves, and roots, with highest levels found in stamens. Found in the root cap, in guard cells and in mesophyll cells.

The protein resides in the plastid. It is found in the chloroplast membrane. It localises to the endoplasmic reticulum membrane. Its subcellular location is the peroxisome membrane. Functionally, glucose 6-phosphate (Glc6P) transporter. Also transports inorganic phosphate, 3-phosphoglycerate, triose phosphates and, to a leser extent, phosphoenolpyruvate. Responsible for the transport of Glc6P into plastids of heterotrophic tissues where it can be used as a carbon source for starch biosynthesis, as substrate for fatty acid biosynthesis or as substrate for NADPH generation via the oxidative pentose phosphate pathway (OPPP). Required for pollen maturation and embryo sac development. Preferentially exchanges Glc6P for ribulose-5-phosphate (Ru5P) in reconstituted yeast proteoliposomes. May supply the substrate (Glc6P) for OPPP reactions inside peroxisomes and exchange it with the product Ru5P which leaves the organelle. The chain is Glucose-6-phosphate/phosphate translocator 1, chloroplastic from Arabidopsis thaliana (Mouse-ear cress).